The primary structure comprises 591 residues: Proteasome-associated ATPase (591 aa).

Residues 10-77 are a coiled coil; the sequence is VAAAEELHAL…LREEVDRLGQ (68 aa). 278–283 contributes to the ATP binding site; sequence GCGKTL. Residues 590-591 form a docks into pockets in the proteasome alpha-ring region; that stretch reads YL.

The protein belongs to the AAA ATPase family. As to quaternary structure, homohexamer. Assembles into a hexameric ring structure that likely caps the 20S proteasome core. Can form a complex composed of two stacked hexameric rings in vitro. Probably interacts with the prokaryotic ubiquitin-like protein Pup through a hydrophobic interface; the expected interacting region of ARC lies in its N-terminal coiled-coil domain. There is likely one Pup binding site per ARC hexamer ring. Upon ATP-binding, the C-terminus of ARC probably interacts with the alpha-rings of the proteasome core, possibly by binding to the intersubunit pockets.

The protein operates within protein degradation; proteasomal Pup-dependent pathway. Its activity is regulated as follows. ATPase activity is inhibited by N-ethylmaleimide (NEM) but not by sodium azide. ATPase which is responsible for recognizing, binding, unfolding and translocation of pupylated proteins into the bacterial 20S proteasome core particle. May be essential for opening the gate of the 20S proteasome via an interaction with its C-terminus, thereby allowing substrate entry and access to the site of proteolysis. Thus, the C-termini of the proteasomal ATPase may function like a 'key in a lock' to induce gate opening and therefore regulate proteolysis. This is Proteasome-associated ATPase from Rhodococcus erythropolis (Arthrobacter picolinophilus).